Reading from the N-terminus, the 444-residue chain is Sonic hedgehog protein (444 aa).

Positions 1–24 (MLVATQSLLLLSFICTLVTPPGLA) are cleaved as a signal peptide. C25 is lipidated: N-palmitoyl cysteine. The Cardin-Weintraub motif lies at 33–39 (KRRHPKK). Positions 90, 91, 96, 126, 127, 130, and 132 each coordinate Ca(2+). Residues H141, D148, and H183 each coordinate Zn(2+). G198 is lipidated: Cholesterol glycine ester. Tandem repeats lie at residues 386–393 (QVDLQSHH), 394–401 (QVDLQSHH), and 403–409 (VDLQSHH). The 3 X 8 AA tandem repeats of Q-V-D-L-Q-S-H-H stretch occupies residues 386-409 (QVDLQSHHQVDLQSHHQVDLQSHH).

Belongs to the hedgehog family. In terms of assembly, interacts with HHATL/GUP1 which negatively regulates HHAT-mediated palmitoylation of the SHH N-terminus. Interacts with BOC and CDON. Interacts with HHIP. Interacts with DISP1 via its cholesterol anchor. Interacts with SCUBE2. Multimer. Post-translationally, the C-terminal domain displays an autoproteolysis activity and a cholesterol transferase activity. Both activities result in the cleavage of the full-length protein and covalent attachment of a cholesterol moiety to the C-terminal of the newly generated N-terminal fragment (ShhN). Cholesterylation is required for the sonic hedgehog protein N-product targeting to lipid rafts and multimerization. ShhN is the active species in both local and long-range signaling, whereas the C-product (ShhC) is degraded in the reticulum endoplasmic. N-palmitoylation by HHAT of ShhN is required for sonic hedgehog protein N-product multimerization and full activity. It is a prerequisite for the membrane-proximal positioning and the subsequent shedding of this N-terminal peptide. In terms of processing, the lipidated N- and C-terminal peptides of ShhNp can be cleaved (shedding). The N-terminal palmitoylated peptide is cleaved at the Cardin-Weintraub (CW) motif site. The cleavage reduced the interactions with heparan sulfate. The cleavage is enhanced by SCUBE2. Strongly expressed in notochord and neural floor plate during embryogenesis. In tadpole, high expression is observed in pancreas/stomach, moderate expression in tail, and low expression in intestine, brain, and hind limb.

The protein localises to the endoplasmic reticulum membrane. It is found in the golgi apparatus membrane. Its subcellular location is the cell membrane. The catalysed reaction is glycyl-L-cysteinyl-[protein] + cholesterol + H(+) = [protein]-C-terminal glycyl cholesterol ester + N-terminal L-cysteinyl-[protein]. The C-terminal part of the sonic hedgehog protein precursor displays an autoproteolysis and a cholesterol transferase activity. Both activities result in the cleavage of the full-length protein into two parts (ShhN and ShhC) followed by the covalent attachment of a cholesterol moiety to the C-terminal of the newly generated ShhN. Both activities occur in the endoplasmic reticulum. Once cleaved, ShhC is degraded in the endoplasmic reticulum. Its function is as follows. The dually lipidated sonic hedgehog protein N-product (ShhNp) is a morphogen which is essential for a variety of patterning events during development. Induces ventral cell fate in the neural tube and somites. Involved in the patterning of the anterior-posterior axis of the developing limb bud. Essential for axon guidance. Binds to the patched (PTCH1) receptor, which functions in association with smoothened (SMO), to activate the transcription of target genes. In the absence of SHH, PTCH1 represses the constitutive signaling activity of SMO. This Xenopus laevis (African clawed frog) protein is Sonic hedgehog protein.